The following is a 273-amino-acid chain: Putative phosphoenolpyruvate synthase regulatory protein (273 aa).

153-160 (GVSRSGKT) contacts ADP.

Belongs to the pyruvate, phosphate/water dikinase regulatory protein family. PSRP subfamily.

It catalyses the reaction [pyruvate, water dikinase] + ADP = [pyruvate, water dikinase]-phosphate + AMP + H(+). The enzyme catalyses [pyruvate, water dikinase]-phosphate + phosphate + H(+) = [pyruvate, water dikinase] + diphosphate. Functionally, bifunctional serine/threonine kinase and phosphorylase involved in the regulation of the phosphoenolpyruvate synthase (PEPS) by catalyzing its phosphorylation/dephosphorylation. This chain is Putative phosphoenolpyruvate synthase regulatory protein, found in Verminephrobacter eiseniae (strain EF01-2).